The following is a 222-amino-acid chain: N-(5'-phosphoribosyl)anthranilate isomerase (222 aa).

Belongs to the TrpF family.

The enzyme catalyses N-(5-phospho-beta-D-ribosyl)anthranilate = 1-(2-carboxyphenylamino)-1-deoxy-D-ribulose 5-phosphate. The protein operates within amino-acid biosynthesis; L-tryptophan biosynthesis; L-tryptophan from chorismate: step 3/5. This is N-(5'-phosphoribosyl)anthranilate isomerase from Prosthecochloris aestuarii (strain DSM 271 / SK 413).